The sequence spans 60 residues: Cytotoxin 7 (60 aa).

Cystine bridges form between Cys3/Cys21, Cys14/Cys38, Cys42/Cys53, and Cys54/Cys59.

This sequence belongs to the three-finger toxin family. Short-chain subfamily. Type IA cytotoxin sub-subfamily. In terms of assembly, monomer in solution; Homodimer and oligomer in the presence of negatively charged lipids forming a pore with a size ranging between 20 and 30 Angstroms. In terms of tissue distribution, expressed by the venom gland.

It is found in the secreted. It localises to the target cell membrane. Functionally, shows cytolytic activity on many different cells by forming pore in lipid membranes. In vivo, increases heart rate or kills the animal by cardiac arrest. In addition, it binds to heparin with high affinity, interacts with Kv channel-interacting protein 1 (KCNIP1) in a calcium-independent manner, and binds to integrin alpha-V/beta-3 (ITGAV/ITGB3) with moderate affinity. Preferentially binds acidic phospholipids like phosphatidylserine, phosphatidic acid and phosphatidyl glycerol. Has hemolytic activity towards human erythrocytes (EC(50)=0.171 uM) and cytolytic activity towards various cell lines. In Naja naja (Indian cobra), this protein is Cytotoxin 7.